A 939-amino-acid polypeptide reads, in one-letter code: Phosphoenolpyruvate carboxylase (939 aa).

Catalysis depends on residues His151 and Lys593.

Belongs to the PEPCase type 1 family. Mg(2+) is required as a cofactor.

It carries out the reaction oxaloacetate + phosphate = phosphoenolpyruvate + hydrogencarbonate. Forms oxaloacetate, a four-carbon dicarboxylic acid source for the tricarboxylic acid cycle. In Gloeobacter violaceus (strain ATCC 29082 / PCC 7421), this protein is Phosphoenolpyruvate carboxylase.